We begin with the raw amino-acid sequence, 887 residues long: Pyruvate dehydrogenase E1 component (887 aa).

Homodimer. Part of the PDH complex, consisting of multiple copies of pyruvate dehydrogenase (E1), dihydrolipoamide acetyltransferase (E2) and lipoamide dehydrogenase (E3). Thiamine diphosphate is required as a cofactor.

The catalysed reaction is N(6)-[(R)-lipoyl]-L-lysyl-[protein] + pyruvate + H(+) = N(6)-[(R)-S(8)-acetyldihydrolipoyl]-L-lysyl-[protein] + CO2. Functionally, component of the pyruvate dehydrogenase (PDH) complex, that catalyzes the overall conversion of pyruvate to acetyl-CoA and CO(2). This Buchnera aphidicola subsp. Baizongia pistaciae (strain Bp) protein is Pyruvate dehydrogenase E1 component (aceE).